We begin with the raw amino-acid sequence, 88 residues long: CLAVATA3/ESR (CLE)-related protein 42 (88 aa).

A signal peptide spans 1–24 (MRSPHITISLVFLFFLFLIIQTHQ). The tract at residues 69–88 (KMIGANEHGVPSGPNPISNR) is disordered. Residues proline 79 and proline 82 each carry the hydroxyproline modification. Proline 82 is a glycosylation site (O-linked (Ara...) hydroxyproline).

This sequence belongs to the CLV3/ESR signal peptide family. Post-translationally, the O-glycosylation (arabinosylation) of the hydroxyproline Pro-82 enhances binding affinity of the CLE42p peptide for its receptor. Expressed at low levels in seedlings, roots and inflorescence.

It is found in the secreted. It localises to the extracellular space. In terms of biological role, extracellular signal peptide that regulates cell fate. Represses tracheary element differentiation but promotes the formation of procambial cells. This is CLAVATA3/ESR (CLE)-related protein 42 from Arabidopsis thaliana (Mouse-ear cress).